The sequence spans 415 residues: Putative glutamate--cysteine ligase 2 (415 aa).

This sequence belongs to the glutamate--cysteine ligase type 2 family. YbdK subfamily.

It catalyses the reaction L-cysteine + L-glutamate + ATP = gamma-L-glutamyl-L-cysteine + ADP + phosphate + H(+). In terms of biological role, ATP-dependent carboxylate-amine ligase which exhibits weak glutamate--cysteine ligase activity. The chain is Putative glutamate--cysteine ligase 2 from Bordetella petrii (strain ATCC BAA-461 / DSM 12804 / CCUG 43448).